Here is a 372-residue protein sequence, read N- to C-terminus: Monocyte differentiation antigen CD14 (372 aa).

A signal peptide spans 1–17; sequence MKLMLGLLLLPLTLVHA. Disulfide bonds link Cys25–Cys38 and Cys36–Cys53. N-linked (GlcNAc...) asparagine glycans are attached at residues Asn39 and Asn46. 11 LRR repeats span residues 57 to 84, 85 to 120, 121 to 146, 147 to 174, 175 to 198, 199 to 226, 227 to 253, 254 to 278, 279 to 299, 300 to 321, and 322 to 346; these read EDVE…LGQY, TDII…YSGL, RELT…GPDL, NTLS…KPGL, KVLS…FPAL, ATLD…FPTL, QVLA…RVPL, QALD…PSQL, NSLN…PAKL, SVLD…LPEV, and GSLS…SGVV. Asn153 and Asn186 each carry an N-linked (GlcNAc...) asparagine glycan. 2 disulfides stabilise this stretch: Cys189/Cys219 and Cys243/Cys272. Residue Asn282 is glycosylated (N-linked (GlcNAc...) asparagine). Residues 290 to 372 are required for response to bacterial lipopolysaccharide (LPS); that stretch reads HVPKGLPAKL…ALLLGHRLFV (83 aa). Asn342 carries the GPI-anchor amidated asparagine lipid modification. Residues 343 to 372 constitute a propeptide, removed in mature form; that stretch reads SGVVIATALSPGSAGLSGTLALLLGHRLFV.

As to quaternary structure, belongs to the lipopolysaccharide (LPS) receptor, a multi-protein complex containing at least CD14, LY96 and TLR4. Interacts with LPS-bound LPB. Interacts with LPAR1. Interacts with the TLR2:TLR6 or TLR2:TLR1 heterodimers; upon interaction with ligands such as diacylated lipopeptides and triacylated lipopeptides, respectively. Interacts with MYO18A. Interacts with FSTL1. As to expression, detected in macrophages and peripheral blood monocytes.

It localises to the cell membrane. Its subcellular location is the secreted. The protein localises to the membrane raft. The protein resides in the golgi apparatus. In terms of biological role, coreceptor for bacterial lipopolysaccharide. In concert with LBP, binds to monomeric lipopolysaccharide and delivers it to the LY96/TLR4 complex, thereby mediating the innate immune response to bacterial lipopolysaccharide (LPS). Acts via MyD88, TIRAP and TRAF6, leading to NF-kappa-B activation, cytokine secretion and the inflammatory response. Acts as a coreceptor for TLR2:TLR6 heterodimer in response to diacylated lipopeptides and for TLR2:TLR1 heterodimer in response to triacylated lipopeptides, these clusters trigger signaling from the cell surface and subsequently are targeted to the Golgi in a lipid-raft dependent pathway. Binds electronegative LDL (LDL(-)) and mediates the cytokine release induced by LDL(-). This chain is Monocyte differentiation antigen CD14 (Cd14), found in Rattus norvegicus (Rat).